A 569-amino-acid polypeptide reads, in one-letter code: Alpha-keto-acid decarboxylase (569 aa).

Glutamate 57 contributes to the thiamine diphosphate binding site. The interval 392 to 474 is thiamine pyrophosphate binding; sequence TAFYGMVEHR…VVVNNDGYTI (83 aa). Mg(2+) contacts are provided by aspartate 442, asparagine 469, and glycine 471.

The protein belongs to the TPP enzyme family. A metal cation is required as a cofactor. Requires thiamine diphosphate as cofactor.

Its function is as follows. Decarboxylates branched-chain and aromatic alpha-keto acids to aldehydes. The protein is Alpha-keto-acid decarboxylase (kdc) of Mycobacterium leprae (strain TN).